A 544-amino-acid chain; its full sequence is MAKSIIFSEEARRALEHGMDILAEAVAVTLGPKGRNVVLEKKFGAPQIVNDGVTIAKEIELEDHIENTGVSLIRQAASKTNDTAGDGTTTATVLAHAMVKEGLKNVAAGANPIALKRGIDKAVKFLVDKIAEHARPVEDSKAIAQVAAISAGNDEEVGRMIAEAMDKVGREGVISLEEGKSMTTELEVTEGMRFDKGYISPYFVTDTERMEAVLENPYILITDKKITLVQDLVPVLEQVARAGRPLLIIAEDIEKEALATLVVNKLRGVLSVVAVKAPGFGDRRKAMLEDIAILTGGEVISEERGLKLENARLDSFGSARRVTVTKDHTTIVAEGNEAAVKARCEQIRRQIEETDSTYDKEKLQERLAKLSGGVAVIKVGAATETEMKDRKLRLEDAINATKAAVEEGIVPGGGTTLAHLMPAVTEWAQANLSGDELVGAMLVARALGAPLRRIAENAGQNGSIVLERVKEKPFTVGYDAQNDAYVDMFEAGIVDPAKVTRSALQNAASIASMVLTTEAIVVDKPEPKSNKPAGGGGGVDDYDY.

ATP contacts are provided by residues 29-32 (TLGP), 86-90 (DGTTT), G413, and D495. The segment at 525 to 544 (PEPKSNKPAGGGGGVDDYDY) is disordered. Positions 533–544 (AGGGGGVDDYDY) are enriched in gly residues.

Belongs to the chaperonin (HSP60) family. Forms a cylinder of 14 subunits composed of two heptameric rings stacked back-to-back. Interacts with the co-chaperonin GroES.

The protein resides in the cytoplasm. It carries out the reaction ATP + H2O + a folded polypeptide = ADP + phosphate + an unfolded polypeptide.. Functionally, together with its co-chaperonin GroES, plays an essential role in assisting protein folding. The GroEL-GroES system forms a nano-cage that allows encapsulation of the non-native substrate proteins and provides a physical environment optimized to promote and accelerate protein folding. This chain is Chaperonin GroEL 2, found in Synechococcus sp. (strain JA-3-3Ab) (Cyanobacteria bacterium Yellowstone A-Prime).